We begin with the raw amino-acid sequence, 351 residues long: Protein Wnt-2b-A (351 aa).

Residues 1 to 16 (MHFAYILILLILTPRV) form the signal peptide. 11 disulfides stabilise this stretch: C67–C78, C118–C126, C128–C148, C197–C211, C199–C206, C269–C300, C285–C295, C299–C339, C315–C330, C317–C327, and C322–C323. N-linked (GlcNAc...) asparagine glycosylation occurs at N77. The O-palmitoleoyl serine; by PORCN moiety is linked to residue S203.

The protein belongs to the Wnt family. Post-translationally, palmitoleoylation is required for efficient binding to frizzled receptors. Depalmitoleoylation leads to Wnt signaling pathway inhibition. Expressed maternally in both vegetal and animal blastomeres with enrichment in the animal hemisphere. Expressed zygotically near the prosencephalic-mesencephalic boundary of the developing brain in neurula and tailbud stages, and also in non-brain areas at tadpole stages.

Its subcellular location is the secreted. It localises to the extracellular space. The protein resides in the extracellular matrix. Functionally, ligand for members of the frizzled family of seven transmembrane receptors. Functions in the canonical Wnt/beta-catenin signaling pathway. This is Protein Wnt-2b-A (wnt2b-a) from Xenopus laevis (African clawed frog).